Reading from the N-terminus, the 596-residue chain is Protein kinase C iota type (596 aa).

Residues 1–12 (MPTQRDSSTMSH) are compositionally biased toward polar residues. A disordered region spans residues 1–23 (MPTQRDSSTMSHTVAGGGSGDHS). Pro-2 carries the post-translational modification N-acetylproline. Residues 2-28 (PTQRDSSTMSHTVAGGGSGDHSHQVRV) form a required for interaction with RAB2 region. The tract at residues 2-253 (PTQRDSSTMS…KASSSLGLQD (252 aa)) is regulatory domain. Thr-3 is modified (phosphothreonine). Ser-7 and Ser-8 each carry phosphoserine. Thr-9 is subject to Phosphothreonine. The region spanning 25-108 (QVRVKAYYRG…SELLIHVFPC (84 aa)) is the PB1 domain. The tract at residues 72 to 91 (DEEGDPCTVSSQLELEEAFR) is interaction with PARD6A. Positions 125-134 (YRRGARRWRK) match the Pseudosubstrate motif. Residues 140 to 190 (GHTFQAKRFNRRAHCAICTDRIWGLGRQGYKCINCKLLVHKKCHKLVTIEC) form a Phorbol-ester/DAG-type zinc finger. The tract at residues 221 to 246 (PSSHESLDQVGEEKEAMNTRESGKAS) is disordered. Positions 225–243 (ESLDQVGEEKEAMNTRESG) are enriched in basic and acidic residues. Residues 254–522 (FDLLRVIGRG…FADIQGHPFF (269 aa)) enclose the Protein kinase domain. 260–268 (IGRGSYAKV) provides a ligand contact to ATP. 2 positions are modified to phosphotyrosine; by SRC: Tyr-265 and Tyr-280. Residue Lys-283 participates in ATP binding. At Tyr-334 the chain carries Phosphotyrosine; by SRC. Asp-378 (proton acceptor) is an active-site residue. At Thr-412 the chain carries Phosphothreonine; by PDPK1. Residues 523-594 (RNVDWDMMEQ…INPLLMSAEE (72 aa)) enclose the AGC-kinase C-terminal domain. Phosphothreonine is present on Thr-564.

The protein belongs to the protein kinase superfamily. AGC Ser/Thr protein kinase family. PKC subfamily. Forms a complex with SQSTM1 and MP2K5. Interacts directly with SQSTM1. Interacts with IKBKB. Interacts with PARD6A, PARD6B and PARD6G. Part of a quaternary complex containing aPKC, PARD3, a PARD6 protein (PARD6A, PARD6B or PARD6G) and a GTPase protein (CDC42 or RAC1). Part of a complex with LLGL1 and PARD6B. Interacts with ADAP1/CENTA1. Interaction with SMG1, through the ZN-finger domain, activates the kinase activity. Interacts with CDK7. Forms a complex with RAB2A and GAPDH involved in recruitment onto the membrane of vesicular tubular clusters (VTCs). Interacts with ECT2 ('Thr-359' phosphorylated form). Interacts with VAMP2. Interacts with WDFY2 (via WD repeats 1-3). Post-translationally, phosphorylation at Thr-412 in the activation loop is not mandatory for activation. Upon neuronal growth factor (NGF) stimulation, phosphorylated by SRC at Tyr-265, Tyr-280 and Tyr-334. Phosphorylation at Tyr-265 facilitates binding to KPNB1/importin-beta regulating entry of PRKCI into the nucleus. Phosphorylation on Tyr-334 is important for NF-kappa-B stimulation. Phosphorylated at Thr-564 during the initial phase of long term potentiation.

The protein localises to the cytoplasm. It localises to the membrane. Its subcellular location is the endosome. The protein resides in the nucleus. The enzyme catalyses L-seryl-[protein] + ATP = O-phospho-L-seryl-[protein] + ADP + H(+). It catalyses the reaction L-threonyl-[protein] + ATP = O-phospho-L-threonyl-[protein] + ADP + H(+). With respect to regulation, atypical PKCs (PRKCI and PRKCZ) exhibit an elevated basal enzymatic activity (that may be due to the interaction with SMG1 or SQSTM1) and are not regulated by diacylglycerol, phosphatidylserine, phorbol esters or calcium ions. Two specific sites, Thr-412 (activation loop of the kinase domain) and Thr-564 (turn motif), need to be phosphorylated for its full activation. Might also be a target for novel lipid activators that are elevated during nutrient-stimulated insulin secretion. In terms of biological role, calcium- and diacylglycerol-independent serine/ threonine-protein kinase that plays a general protective role against apoptotic stimuli, is involved in NF-kappa-B activation, cell survival, differentiation and polarity, and contributes to the regulation of microtubule dynamics in the early secretory pathway. Is necessary for BCR-ABL oncogene-mediated resistance to apoptotic drug in leukemia cells, protecting leukemia cells against drug-induced apoptosis. In cultured neurons, prevents amyloid beta protein-induced apoptosis by interrupting cell death process at a very early step. In glioblastoma cells, may function downstream of phosphatidylinositol 3-kinase (PI(3)K) and PDPK1 in the promotion of cell survival by phosphorylating and inhibiting the pro-apoptotic factor BAD. Can form a protein complex in non-small cell lung cancer (NSCLC) cells with PARD6A and ECT2 and regulate ECT2 oncogenic activity by phosphorylation, which in turn promotes transformed growth and invasion. In response to nerve growth factor (NGF), acts downstream of SRC to phosphorylate and activate IRAK1, allowing the subsequent activation of NF-kappa-B and neuronal cell survival. Functions in the organization of the apical domain in epithelial cells by phosphorylating EZR. This step is crucial for activation and normal distribution of EZR at the early stages of intestinal epithelial cell differentiation. Forms a protein complex with LLGL1 and PARD6B independently of PARD3 to regulate epithelial cell polarity. Plays a role in microtubule dynamics in the early secretory pathway through interaction with RAB2A and GAPDH and recruitment to vesicular tubular clusters (VTCs). In human coronary artery endothelial cells (HCAEC), is activated by saturated fatty acids and mediates lipid-induced apoptosis. Involved in early synaptic long term potentiation phase in CA1 hippocampal cells and short term memory formation. The sequence is that of Protein kinase C iota type (PRKCI) from Pongo abelii (Sumatran orangutan).